The chain runs to 265 residues: U6 snRNA phosphodiesterase 1 (265 aa).

The segment at 1–72 (MSAAPLVGYS…DSTKHGGRVR (72 aa)) is disordered. Residues 20–31 (DGMRTRPGDGSH) are compositionally biased toward basic and acidic residues. The active-site Proton acceptor is H120. 120-122 (HLS) provides a ligand contact to AMP. UMP contacts are provided by residues Q164, Y202, and 206–210 (SFHLS). AMP-binding positions include Y202 and 204 to 210 (DPSFHLS). Residue H208 is the Proton donor of the active site.

This sequence belongs to the 2H phosphoesterase superfamily. USB1 family. In terms of assembly, interacts with PLRG1, CDC5L and PRPF19.

The protein localises to the nucleus. The enzyme catalyses a 3'-end uridylyl-uridine-RNA = a 3'-end 2',3'-cyclophospho-uridine-RNA + uridine. It catalyses the reaction a 3'-end uridylyl-adenosine-RNA = a 3'-end 2',3'-cyclophospho-uridine-RNA + adenosine. Its activity is regulated as follows. 3'-5' RNA exonuclease activity is inhibited by a 3' phosphate terminated RNA. 3'-5' RNA exonuclease that trims the 3' end of oligo(U) and oligo(A) tracts of the pre-U6 small nuclear RNA (snRNA) molecule, leading to the formation of a mature U6 snRNA 3' end-terminated with a 2',3'-cyclic phosphate. Participates in the U6 snRNA 3' end processing that prevents U6 snRNA degradation. In addition also removes uridines from the 3' end of U6atac snRNA and possibly the vault RNA VTRNA1-1. In Homo sapiens (Human), this protein is U6 snRNA phosphodiesterase 1.